The chain runs to 274 residues: MKTTLKMTALAALSAFVLAGCGSHQMKSEGHANMQLQQQAVLGLNWMQDSGEYKALAYQAYNAAKVAFDHAKVAKGKKKAVVADLDETMLDNSPYAGWQVQNNKPFDGKDWTRWVDARQSRAVPGAVEFNNYVNSHNGKVFYVTNRKDSTEKSGTIDDMKRLGFNGVEESAFYLKKDKSAKAARFAEIEKQGYEIVLYVGDNLDDFGNTVYGKLNADRRAFVDQNQGKFGKTFIMLPNANYGGWEGGLAEGYFKKDTQGQIKARLDAVQAWDGK.

A signal peptide spans 1–20; sequence MKTTLKMTALAALSAFVLAG. Cys-21 carries the N-palmitoyl cysteine lipid modification. Cys-21 carries the S-diacylglycerol cysteine lipid modification.

It is found in the cell outer membrane. The chain is Lipoprotein E (hel) from Haemophilus influenzae (strain ATCC 51907 / DSM 11121 / KW20 / Rd).